Here is a 918-residue protein sequence, read N- to C-terminus: Probable UDP-N-acetylglucosamine--peptide N-acetylglucosaminyltransferase SPINDLY (918 aa).

TPR repeat units lie at residues 34–66 (GKEA…SKNV), 67–99 (EAHI…DPHN), 101–132 (CALT…DPSY), 140–171 (ATVL…DPHY), 172–205 (APAC…SPTY), 207–238 (DAYC…NNMG), 239–271 (IALT…NWHY), 273–305 (DAMY…NPHC), 306–339 (AEAC…KPNF), 341–373 (QSLN…NPTY), and 374–407 (AEAY…DPDS). The segment at 408 to 918 (RNAGQNRLLA…LNCGDQCFRV (511 aa)) is catalytic region. Positions 843–853 (QLHQQPNTSPQ) are enriched in polar residues. The segment at 843–877 (QLHQQPNTSPQKLVKDEPADDASGPEHGPASKDNP) is disordered.

It belongs to the glycosyltransferase 41 family. O-GlcNAc transferase subfamily.

The protein resides in the nucleus. The catalysed reaction is L-seryl-[protein] + UDP-N-acetyl-alpha-D-glucosamine = 3-O-(N-acetyl-beta-D-glucosaminyl)-L-seryl-[protein] + UDP + H(+). It carries out the reaction L-threonyl-[protein] + UDP-N-acetyl-alpha-D-glucosamine = 3-O-(N-acetyl-beta-D-glucosaminyl)-L-threonyl-[protein] + UDP + H(+). It functions in the pathway protein modification; protein glycosylation. Probable O-linked N-acetylglucosamine transferase (OGT) involved in various processes such as gibberellin (GA) signaling pathway. OGTs catalyze the addition of nucleotide-activated sugars directly onto the polypeptide through O-glycosidic linkage with the hydroxyl of serine or threonine. Probably acts by adding O-linked sugars to yet unknown proteins. May function as a negative regulator of GA signal transduction during vernalization, inhibiting adventitious shoot elongation during vernalization. This chain is Probable UDP-N-acetylglucosamine--peptide N-acetylglucosaminyltransferase SPINDLY (SPY), found in Eustoma exaltatum subsp. russellianum (Bluebells).